The primary structure comprises 190 residues: Elongation factor P-like protein (190 aa).

The protein belongs to the elongation factor P family.

The chain is Elongation factor P-like protein from Salmonella gallinarum (strain 287/91 / NCTC 13346).